The sequence spans 335 residues: Large ribosomal subunit protein uL3 (335 aa).

Disordered stretches follow at residues 1 to 35, 234 to 256, and 312 to 335; these read MPQP…ADDG, IGNL…GQTG, and AVRP…SNQG. A compositionally biased stretch (polar residues) spans 244–256; sequence RVRSTVPQQGQTG.

Belongs to the universal ribosomal protein uL3 family. Part of the 50S ribosomal subunit. Forms a cluster with proteins L14 and L24e.

In terms of biological role, one of the primary rRNA binding proteins, it binds directly near the 3'-end of the 23S rRNA, where it nucleates assembly of the 50S subunit. This is Large ribosomal subunit protein uL3 from Halobacterium salinarum (strain ATCC 29341 / DSM 671 / R1).